Reading from the N-terminus, the 516-residue chain is Polyprenol-phosphate-mannose--protein mannosyltransferase (516 aa).

The next 9 helical transmembrane spans lie at 113-133 (YNGLGWRFSGAVCGVIIVMLV), 143-163 (STLVGAIAGLLIIADGVSFVS), 166-186 (TALLDVFLVMFAVAAFACLMV), 234-254 (WSGLYFVLFFGVMTLVFDAIA), 275-295 (AAYVFGLIPFAVYLASYAPWF), 384-404 (VMLVGTPAMWFIAVPVLGWAL), 413-433 (WRYGAVLVGYMAGFLPWFADI), 437-457 (MYFFYATVMAPFLVLAIALIL), and 473-493 (LGLLTVCFYVALVITNFAWMY).

Belongs to the glycosyltransferase 39 family.

The protein resides in the cell membrane. It participates in protein modification; protein glycosylation. In terms of biological role, protein O-mannosyltransferase that catalyzes the transfer of a single mannose residue from a polyprenol phospho-mannosyl lipidic donor to the hydroxyl group of selected serine and threonine residues in acceptor proteins. In Mycolicibacterium smegmatis (strain ATCC 700084 / mc(2)155) (Mycobacterium smegmatis), this protein is Polyprenol-phosphate-mannose--protein mannosyltransferase.